The following is a 1208-amino-acid chain: E3 ubiquitin-protein ligase DZIP3 (1208 aa).

Basic and acidic residues predominate over residues 10–29; sequence VRHPAVEDQRKEETENKLEK. Disordered stretches follow at residues 10–38 and 637–698; these read VRHP…NKQE and GTSI…PHSV. Coiled-coil stretches lie at residues 14 to 43, 647 to 676, 792 to 853, and 904 to 939; these read AVED…DIPT, ESLK…SKED, IASL…SKLN, and QLKA…KVKQ. Over residues 637–647 the composition is skewed to polar residues; that stretch reads GTSIPSESSTE. Residues 648 to 657 show a composition bias toward basic and acidic residues; the sequence is SLKDLQEVKS. Positions 658–669 are enriched in basic residues; the sequence is KQRKKKKTKNKK. The segment covering 670–693 has biased composition (basic and acidic residues); it reads NKDSKEDQVPYVVEKEEQLRKEQA. Residues 1088–1145 are disordered; the sequence is KSQSQGKSVSNVNCVSPSHSPSQPDAAQPPKPAWRPLTSQGPATWEGASNPDEEEEEE. Positions 1089-1112 are enriched in polar residues; it reads SQSQGKSVSNVNCVSPSHSPSQPD. The RING-type; atypical zinc-finger motif lies at 1148–1188; sequence CVICHENLSPENLSVLPCAHKFHAQCIRPWLMQQGTCPTCR.

In terms of assembly, interacts with DAZ proteins. Widely expressed at low level. Highly expressed in skeletal muscle, kidney and heart. Expressed at low level in placenta, lung, brain, liver and pancreas.

The protein resides in the cytoplasm. The catalysed reaction is S-ubiquitinyl-[E2 ubiquitin-conjugating enzyme]-L-cysteine + [acceptor protein]-L-lysine = [E2 ubiquitin-conjugating enzyme]-L-cysteine + N(6)-ubiquitinyl-[acceptor protein]-L-lysine.. The protein operates within protein modification; protein ubiquitination. E3 Ubiquitin ligase proteins mediate ubiquitination and subsequent proteasomal degradation of target proteins. E3 ubiquitin ligases accept ubiquitin from an E2 ubiquitin-conjugating enzyme in the form of a thioester and then directly transfers the ubiquitin to targeted substrates. Able to specifically bind RNA. This Homo sapiens (Human) protein is E3 ubiquitin-protein ligase DZIP3 (DZIP3).